The primary structure comprises 182 residues: ADP-ribosylation factor-like protein 11 (182 aa).

The N-myristoyl glycine moiety is linked to residue G2. GTP is bound by residues 19-26 (GLDSAGKT), 63-67 (DVGGQ), and 122-125 (NKQE).

Belongs to the small GTPase superfamily. Arf family.

May play a role in apoptosis. May act as a tumor suppressor. In Bos taurus (Bovine), this protein is ADP-ribosylation factor-like protein 11 (ARL11).